The sequence spans 122 residues: Large ribosomal subunit protein uL14 (122 aa).

The protein belongs to the universal ribosomal protein uL14 family. Part of the 50S ribosomal subunit. Forms a cluster with proteins L3 and L19. In the 70S ribosome, L14 and L19 interact and together make contacts with the 16S rRNA in bridges B5 and B8.

Its function is as follows. Binds to 23S rRNA. Forms part of two intersubunit bridges in the 70S ribosome. The protein is Large ribosomal subunit protein uL14 of Alkalilimnicola ehrlichii (strain ATCC BAA-1101 / DSM 17681 / MLHE-1).